Reading from the N-terminus, the 358-residue chain is Heme A synthase (358 aa).

Helical transmembrane passes span 22–42, 107–127, 133–153, 172–192, 208–228, 269–289, 302–322, and 324–344; these read IQVW…VGGA, VLGR…WAIK, VLLQ…VGWW, LAFH…LSQG, FAGW…LVAG, FVHR…AFYV, AFFI…TLLQ, and VPIS…CFSV. H271 contacts heme. Heme is bound at residue H332.

This sequence belongs to the COX15/CtaA family. Type 2 subfamily. As to quaternary structure, interacts with CtaB. It depends on heme b as a cofactor.

The protein localises to the cell membrane. The enzyme catalyses Fe(II)-heme o + 2 A + H2O = Fe(II)-heme a + 2 AH2. It participates in porphyrin-containing compound metabolism; heme A biosynthesis; heme A from heme O: step 1/1. Catalyzes the conversion of heme O to heme A by two successive hydroxylations of the methyl group at C8. The first hydroxylation forms heme I, the second hydroxylation results in an unstable dihydroxymethyl group, which spontaneously dehydrates, resulting in the formyl group of heme A. This chain is Heme A synthase, found in Bartonella henselae (strain ATCC 49882 / DSM 28221 / CCUG 30454 / Houston 1) (Rochalimaea henselae).